A 992-amino-acid chain; its full sequence is Vacuolar membrane protease (992 aa).

Residues 1-24 (MSPAMANPRVRKFNPIAFTPLPVT) are Cytoplasmic-facing. Residues 25-45 (FITTIVYLAVLILVLVTYLVV) traverse the membrane as a helical segment. Residues 46-390 (PPAPTLEMSP…SAFAVFRLHT (345 aa)) lie on the Vacuolar side of the membrane. 3 N-linked (GlcNAc...) asparagine glycosylation sites follow: N59, N115, and N118. Zn(2+)-binding residues include H174 and D186. The active-site Proton acceptor is E220. Residue E221 coordinates Zn(2+). A glycan (N-linked (GlcNAc...) asparagine) is linked at N237. 2 residues coordinate Zn(2+): E246 and H319. A helical transmembrane segment spans residues 391–411 (LFALSVTLLVIGPLVLFITSI). The Cytoplasmic portion of the chain corresponds to 412 to 446 (ALSKTDRMYLFSMSKSLGGASETVSLRGLRGLFRT). A helical transmembrane segment spans residues 447–467 (PIILTVTTVISIGLAYLLEKI). Residues 468 to 474 (NPYIVHS) are Vacuolar-facing. A helical transmembrane segment spans residues 475–495 (SQFAVWSMMLSVWIFVAWFLA). Over 496–508 (RVADFFRPSALHR) the chain is Cytoplasmic. The helical transmembrane segment at 509–529 (AYSYTWIFIVTWIMLVISTVY) threads the bilayer. Residues 530 to 533 (ANQK) lie on the Vacuolar side of the membrane. Residues 534–554 (GIAAGYFTFFYFAAVFLATWV) traverse the membrane as a helical segment. Topologically, residues 555 to 671 (SYLELFSLPR…WSWTLPRWTW (117 aa)) are cytoplasmic. The interval 579–620 (RSSSLSSRLLTPSADELPSDIGPNGAENVGDPDETDPTESTS) is disordered. Residues 672 to 692 (ILQLLLLAPIVIILVGQVGLL) traverse the membrane as a helical segment. The Vacuolar segment spans residues 693 to 708 (LTTAMSQIGSDGVSTF). The helical transmembrane segment at 709–729 (IVYLACALFSTLLFAPLLPFI) threads the bilayer. Residues 730 to 736 (HRFTYHV) lie on the Cytoplasmic side of the membrane. Residues 737-757 (PIFLLLIFIGTLIYNLVAFPF) traverse the membrane as a helical segment. Residues 758–992 (SPANRLKIFF…VEASHDFIIQ (235 aa)) lie on the Vacuolar side of the membrane. N-linked (GlcNAc...) asparagine glycans are attached at residues N805, N846, and N954.

The protein belongs to the peptidase M28 family. The cofactor is Zn(2+).

It localises to the vacuole membrane. In terms of biological role, may be involved in vacuolar sorting and osmoregulation. This chain is Vacuolar membrane protease, found in Paracoccidioides brasiliensis (strain Pb18).